A 199-amino-acid polypeptide reads, in one-letter code: Recombination protein RecR (199 aa).

A C4-type zinc finger spans residues 56-71; it reads CSICFNWSAEDPCEIC. The Toprim domain maps to 79-174; the sequence is SLWCVVADVK…TLRMTRLAFG (96 aa).

Belongs to the RecR family.

May play a role in DNA repair. It seems to be involved in an RecBC-independent recombinational process of DNA repair. It may act with RecF and RecO. This is Recombination protein RecR from Synechococcus sp. (strain JA-2-3B'a(2-13)) (Cyanobacteria bacterium Yellowstone B-Prime).